A 245-amino-acid polypeptide reads, in one-letter code: 1-(5-phosphoribosyl)-5-[(5-phosphoribosylamino)methylideneamino] imidazole-4-carboxamide isomerase (245 aa).

Aspartate 11 (proton acceptor) is an active-site residue. Residue aspartate 132 is the Proton donor of the active site.

The protein belongs to the HisA/HisF family.

It is found in the cytoplasm. The catalysed reaction is 1-(5-phospho-beta-D-ribosyl)-5-[(5-phospho-beta-D-ribosylamino)methylideneamino]imidazole-4-carboxamide = 5-[(5-phospho-1-deoxy-D-ribulos-1-ylimino)methylamino]-1-(5-phospho-beta-D-ribosyl)imidazole-4-carboxamide. Its pathway is amino-acid biosynthesis; L-histidine biosynthesis; L-histidine from 5-phospho-alpha-D-ribose 1-diphosphate: step 4/9. The protein is 1-(5-phosphoribosyl)-5-[(5-phosphoribosylamino)methylideneamino] imidazole-4-carboxamide isomerase of Geobacillus thermodenitrificans (strain NG80-2).